Reading from the N-terminus, the 229-residue chain is Ribosome maturation factor RimM (229 aa).

The disordered stretch occupies residues 1-39 (MAGHDSGSAKRGRSPSFGVFVRKPVERAPTKGAGDGAAD). The 82-residue stretch at 148-229 (ADEFYWVDLI…RIVVDWEADY (82 aa)) folds into the PRC barrel domain.

It belongs to the RimM family. As to quaternary structure, binds ribosomal protein uS19.

The protein resides in the cytoplasm. Its function is as follows. An accessory protein needed during the final step in the assembly of 30S ribosomal subunit, possibly for assembly of the head region. Essential for efficient processing of 16S rRNA. May be needed both before and after RbfA during the maturation of 16S rRNA. It has affinity for free ribosomal 30S subunits but not for 70S ribosomes. This chain is Ribosome maturation factor RimM, found in Burkholderia thailandensis (strain ATCC 700388 / DSM 13276 / CCUG 48851 / CIP 106301 / E264).